A 466-amino-acid chain; its full sequence is MSDKKTSNQMWGGRFASGPAAIMEAINASISFDRKLYAQDIRGSIAHSEMLAQTGIISTADQEKIAHGLNTILKEIEAGSFEFSTRLEDIHMNVEARLADLIGSAAGRLHTARSRNDQVAVDLRLWVKDECFRVAEALKGLITALLARAEEHAATVMPGFTHMQAAQPVTFGHHCMAYVEMFARDLSRVRDAIERMDESPLGAAALAGTSFPIDRHRTAKALGFREPMRNSLDSVSDRDFALDFLAMAAICATHLSRLAEEIIIWSTPQFGFIRLSDSFSTGSSIMPQKKNPDAAELVRGKTGRVNGHLVGLLTVMKGMPLTYGKDMQEDKESVFDAAETLDLMLAAMTGMVSDMTVNAAAMKKAAGSGHATATDLADWLVRTLGLPFREAHHVTGRAVALAEEKKVSLEKLSLEDLQSINPGITADIFSVLAVQNSVKSRTSFGGTAPSEVRKQIRYWKKRLAKA.

This sequence belongs to the lyase 1 family. Argininosuccinate lyase subfamily.

Its subcellular location is the cytoplasm. It carries out the reaction 2-(N(omega)-L-arginino)succinate = fumarate + L-arginine. Its pathway is amino-acid biosynthesis; L-arginine biosynthesis; L-arginine from L-ornithine and carbamoyl phosphate: step 3/3. The polypeptide is Argininosuccinate lyase 1 (Mesorhizobium japonicum (strain LMG 29417 / CECT 9101 / MAFF 303099) (Mesorhizobium loti (strain MAFF 303099))).